The chain runs to 131 residues: MSMSDPIADMLTRIRNAQMVEKTSVAMPSSKLKSAIAQVLKDEGYIDGFAVKTTDGKSQLEISLKYYAGRPVIERIERVSRPGLRIYKGRHDIPTVMNGLGVAIVTTPQGVMTDRKARAAGIGGEVLCYVA.

This sequence belongs to the universal ribosomal protein uS8 family. As to quaternary structure, part of the 30S ribosomal subunit. Contacts proteins S5 and S12.

Its function is as follows. One of the primary rRNA binding proteins, it binds directly to 16S rRNA central domain where it helps coordinate assembly of the platform of the 30S subunit. This is Small ribosomal subunit protein uS8 from Leptothrix cholodnii (strain ATCC 51168 / LMG 8142 / SP-6) (Leptothrix discophora (strain SP-6)).